Consider the following 349-residue polypeptide: Green-sensitive opsin-4 (349 aa).

Over Met-1 to Gln-36 the chain is Extracellular. Residues Asn-2 and Asn-15 are each glycosylated (N-linked (GlcNAc...) asparagine). Residues Phe-37–Val-61 traverse the membrane as a helical segment. Residues Thr-62 to Asn-73 lie on the Cytoplasmic side of the membrane. Residues Phe-74–Ile-99 form a helical membrane-spanning segment. Residues Asn-100 to Glu-113 are Extracellular-facing. A disulfide bridge connects residues Cys-110 and Cys-187. Residues Gly-114–Val-133 traverse the membrane as a helical segment. Topologically, residues Glu-134–His-152 are cytoplasmic. Residues Ala-153–Ser-176 traverse the membrane as a helical segment. Residues Arg-177–Ser-202 are Extracellular-facing. An N-linked (GlcNAc...) asparagine glycan is attached at Asn-200. Residues Tyr-203–Val-230 traverse the membrane as a helical segment. Over Lys-231–Arg-252 the chain is Cytoplasmic. A helical transmembrane segment spans residues Met-253–Phe-276. Over Phe-277 to Ser-284 the chain is Extracellular. The chain crosses the membrane as a helical span at residues Ala-285–Leu-309. At Lys-296 the chain carries N6-(retinylidene)lysine. Residues Asn-310–Ala-349 lie on the Cytoplasmic side of the membrane. The tract at residues Gly-329–Ala-349 is disordered. The span at Ser-334–Ala-349 shows a compositional bias: low complexity.

The protein belongs to the G-protein coupled receptor 1 family. Opsin subfamily. Phosphorylated on some or all of the serine and threonine residues present in the C-terminal region. In terms of tissue distribution, retinal double cone accessory photoreceptor cell outer segments.

It localises to the membrane. Functionally, visual pigments are the light-absorbing molecules that mediate vision. They consist of an apoprotein, opsin, covalently linked to cis-retinal. The sequence is that of Green-sensitive opsin-4 (opn1mw4) from Danio rerio (Zebrafish).